The sequence spans 68 residues: Small ribosomal subunit protein bS21 (68 aa).

A disordered region spans residues 35–68; it reads HYEKPSEKRARERAAAVRRARKMERKRMERDGIK. The span at 37 to 49 shows a compositional bias: basic and acidic residues; it reads EKPSEKRARERAA. Over residues 50–59 the composition is skewed to basic residues; it reads AVRRARKMER.

Belongs to the bacterial ribosomal protein bS21 family.

The chain is Small ribosomal subunit protein bS21 from Sphingopyxis alaskensis (strain DSM 13593 / LMG 18877 / RB2256) (Sphingomonas alaskensis).